A 122-amino-acid chain; its full sequence is Large ribosomal subunit protein uL14 (122 aa).

It belongs to the universal ribosomal protein uL14 family. In terms of assembly, part of the 50S ribosomal subunit. Forms a cluster with proteins L3 and L19. In the 70S ribosome, L14 and L19 interact and together make contacts with the 16S rRNA in bridges B5 and B8.

Functionally, binds to 23S rRNA. Forms part of two intersubunit bridges in the 70S ribosome. The sequence is that of Large ribosomal subunit protein uL14 from Lawsonia intracellularis (strain PHE/MN1-00).